A 197-amino-acid polypeptide reads, in one-letter code: ADP-ribosylation factor-like protein 16 (197 aa).

GTP is bound by residues 30–37 (GATGVGKT), 82–86 (ELGGC), and 139–142 (NKID).

The protein belongs to the small GTPase superfamily. Arf family. Interacts with RIGI; this interaction is GTP-dependent and induced upon viral infection; this interaction suppresses the RNA sensing activity of RIGI.

The protein localises to the cytoplasm. In terms of biological role, may suppress the RNA sensing activity of RIGI in a GTP-dependent. This is ADP-ribosylation factor-like protein 16 from Homo sapiens (Human).